Here is a 793-residue protein sequence, read N- to C-terminus: Ent-copalyl diphosphate synthase, chloroplastic (793 aa).

Residues 1–47 (MPLASNPVAFLPSSTAHGDLPAAAFSRSSAGCLQLCRPLTPTSSLQC) constitute a chloroplast transit peptide. Residues aspartate 372 and aspartate 374 each coordinate Mg(2+). A DXDD motif motif is present at residues 372–375 (DIDD).

This sequence belongs to the terpene synthase family. Requires Mg(2+) as cofactor.

It is found in the plastid. Its subcellular location is the chloroplast. The enzyme catalyses (2E,6E,10E)-geranylgeranyl diphosphate = ent-copalyl diphosphate. The protein operates within plant hormone biosynthesis; gibberellin biosynthesis. Functionally, catalyzes the conversion of geranylgeranyl diphosphate (GGPP) to the gibberellin precursor ent-copalyl diphosphate (CPP). This is Ent-copalyl diphosphate synthase, chloroplastic from Salvia miltiorrhiza (Chinese sage).